A 225-amino-acid polypeptide reads, in one-letter code: PKHD-type hydroxylase YbiX (225 aa).

The Fe2OG dioxygenase domain occupies 78-177; the sequence is TLSTPLFNRY…RVASFMWIQS (100 aa). 3 residues coordinate Fe cation: His-96, Asp-98, and His-158. Residue Arg-168 participates in 2-oxoglutarate binding.

It depends on Fe(2+) as a cofactor. Requires L-ascorbate as cofactor.

In Escherichia coli (strain K12 / DH10B), this protein is PKHD-type hydroxylase YbiX.